A 265-amino-acid polypeptide reads, in one-letter code: Short-chain dehydrogenase/reductase fsr5 (265 aa).

The signal sequence occupies residues 1–32 (MASLGKYVSKLAGSRVLVIGGSSGIGFGVAEA). Residues Ser22, Ser23, Ile25, Ser45, and Lys50 each contribute to the NADP(+) site. Residue Asn62 is glycosylated (N-linked (GlcNAc...) asparagine). NADP(+) contacts are provided by Asn88, Arg130, and Thr204. Residues Asn218 and Asn250 are each glycosylated (N-linked (GlcNAc...) asparagine).

The protein belongs to the short-chain dehydrogenases/reductases (SDR) family.

Its function is as follows. Short-chain dehydrogenase/reductase; part of the gene cluster that mediates the biosynthesis of fusarubins, highly pigmented naphthoquinones responsible for the coloration of the fruiting bodies. The non-reducing polyketide synthase FSR1 is responsible for the condensation of seven acetyl-CoA units to yield a haptaketide. After rings A and B are formed by aldol-type cyclization, the PKS-derived product is released as 6-O-demethylfusarubinaldehyde. Then, two hydroxyl groups at C-5 and C-10 are incorporated by FSR3, and simultaneously hydroxyl groups at C-6 and C-8 are methylated by FSR2. The aldehyde is, on the one hand, reduced by FSR3 to 8-O-methylfusarubin alcohol, which equilibrates mainly with 8-O-methylfusarubin and only small amounts of 8-O-methylnectriafurone. On the other hand, the aldehyde can be oxidized to form 8-O-methylfusarubinic acid, a reaction driven by FSR3 equilibrating with 8-O-methylfusarubinlactone, finally resulting in 8-O-methylanhydrofusarubinlactol after a further reduction step and loss of water. 8-O-Methylfusarubinic acid can also undergo decarboxylation, resulting in 8-O-methyl-13-hydroxynorjavanicin after another hydroxylation step at C-13. Both steps are most likely also accomplished by FSR3. No enzymatic function has been determined so far for either FSR4 and FSR5. Their deletion does not alter the product spectrum, but the possibility that they catalyze specific enzymatic steps during perithecium development cannot be ruled out. FSR4 might possess a regulatory function in the biosynthesis of fusarubins. This is Short-chain dehydrogenase/reductase fsr5 from Gibberella fujikuroi (strain CBS 195.34 / IMI 58289 / NRRL A-6831) (Bakanae and foot rot disease fungus).